Here is a 257-residue protein sequence, read N- to C-terminus: Type III pantothenate kinase (257 aa).

Residue 7-14 (DIGNSHTV) participates in ATP binding. 106–109 (GTDR) is a substrate binding site. Asp-108 acts as the Proton acceptor in catalysis. K(+) is bound at residue Asp-128. Thr-132 serves as a coordination point for ATP. Thr-184 is a binding site for substrate.

The protein belongs to the type III pantothenate kinase family. Homodimer. NH4(+) is required as a cofactor. K(+) serves as cofactor.

It is found in the cytoplasm. The catalysed reaction is (R)-pantothenate + ATP = (R)-4'-phosphopantothenate + ADP + H(+). Its pathway is cofactor biosynthesis; coenzyme A biosynthesis; CoA from (R)-pantothenate: step 1/5. Functionally, catalyzes the phosphorylation of pantothenate (Pan), the first step in CoA biosynthesis. This is Type III pantothenate kinase from Nocardioides sp. (strain ATCC BAA-499 / JS614).